The sequence spans 640 residues: DNA topoisomerase 3 (640 aa).

The 155-residue stretch at 21 to 175 (RVLCVAEKNS…WRAQFSHLEP (155 aa)) folds into the Toprim domain. Mg(2+)-binding residues include E27, D137, and D139. Positions 189–618 (DMKLVAAVEC…QLLPLYKEAF (430 aa)) constitute a Topo IA-type catalytic domain. The O-(5'-phospho-DNA)-tyrosine intermediate role is filled by Y354.

The protein belongs to the type IA topoisomerase family. Requires Mg(2+) as cofactor.

The catalysed reaction is ATP-independent breakage of single-stranded DNA, followed by passage and rejoining.. Introduces a single-strand break via transesterification at a target site in duplex DNA. Releases the supercoiling and torsional tension of DNA introduced during the DNA replication and transcription by transiently cleaving and rejoining one strand of the DNA duplex. The scissile phosphodiester is attacked by the catalytic tyrosine of the enzyme, resulting in the formation of a DNA-(5'-phosphotyrosyl)-enzyme intermediate and the expulsion of a 3'-OH DNA strand. This Candidozyma auris (Yeast) protein is DNA topoisomerase 3 (TOP3).